The following is a 666-amino-acid chain: Probable potassium transport system protein Kup (666 aa).

12 helical membrane passes run 16 to 36 (GFIIALGIVYGDIGTSPLYTM), 58 to 78 (ISLIIWTLTLITTIKYVLIAL), 98 to 118 (ISPWLIIPAMIGGATLLSDGA), 141 to 161 (IYQNQTNVIITTLVILIVLFG), 165 to 185 (FGTGFIGKIFGPVMFIWFSFL), 221 to 241 (IFILGSIFLATTGAEALYSDL), 253 to 273 (WPFVKMCIVLSYCGQAAWILA), 299 to 319 (LATLAAIIASQALISGSFTLI), 343 to 363 (LYIPVINWILFAVTSCTVLAF), 373 to 393 (YGLAITITMLMTTILLKYYLI), 399 to 419 (PILAHLAMAFFALVEFIFFLA), and 424 to 444 (FMHGGYAVVILALAIVFVMFI).

It belongs to the HAK/KUP transporter (TC 2.A.72) family.

The protein localises to the cell membrane. The enzyme catalyses K(+)(in) + H(+)(in) = K(+)(out) + H(+)(out). Its function is as follows. Transport of potassium into the cell. Likely operates as a K(+):H(+) symporter. The sequence is that of Probable potassium transport system protein Kup from Streptococcus pyogenes serotype M28 (strain MGAS6180).